The chain runs to 549 residues: E-selectin (549 aa).

Positions 1–21 are cleaved as a signal peptide; sequence MNASCFLSALTFVLLIGKSIA. The region spanning 22–139 is the C-type lectin domain; sequence WYYNASSELM…CDKKKLALCY (118 aa). The Extracellular portion of the chain corresponds to 22–494; it reads WYYNASSELM…CEAPANPPRP (473 aa). 2 N-linked (GlcNAc...) asparagine glycosylation sites follow: asparagine 25 and asparagine 60. 17 disulfides stabilise this stretch: cysteine 40/cysteine 138, cysteine 111/cysteine 130, cysteine 143/cysteine 154, cysteine 148/cysteine 163, cysteine 165/cysteine 174, cysteine 180/cysteine 225, cysteine 193/cysteine 206, cysteine 210/cysteine 238, cysteine 243/cysteine 287, cysteine 256/cysteine 269, cysteine 273/cysteine 300, cysteine 305/cysteine 350, cysteine 336/cysteine 363, cysteine 368/cysteine 413, cysteine 399/cysteine 426, cysteine 431/cysteine 472, and cysteine 458/cysteine 485. Residues glutamate 101, asparagine 103, and glutamate 109 each coordinate Ca(2+). A carbohydrate is bound by residues 101–109, 113–118, and 126–128; these read EPNNKQRNE, EIYIQR, and NDE. Residues asparagine 126 and aspartate 127 each coordinate Ca(2+). Positions 140 to 175 constitute an EGF-like domain; the sequence is TASCTNTSCSGHGECVETINSYTCKCHPGFLGPKCD. An N-linked (GlcNAc...) asparagine glycan is attached at asparagine 145. 5 consecutive Sushi domains span residues 178 to 240, 241 to 302, 303 to 365, 366 to 428, and 429 to 487; these read VTCQ…ACHV, VECK…SCKA, VTCD…VCKA, SQCE…TCAG, and VQCS…TCEA. 2 N-linked (GlcNAc...) asparagine glycosylation sites follow: asparagine 192 and asparagine 203. Asparagine 266 carries N-linked (GlcNAc...) asparagine glycosylation. Asparagine 313, asparagine 320, and asparagine 333 each carry an N-linked (GlcNAc...) asparagine glycan. Asparagine 441 and asparagine 465 each carry an N-linked (GlcNAc...) asparagine glycan. A helical membrane pass occupies residues 495-516; it reads LVVALSVAATSLLTLSSLIYVL. At 517-549 the chain is on the cytoplasmic side; the sequence is KRFFWKKAKKFVPASSCQSLQSFENYQGPSYII.

It belongs to the selectin/LECAM family. As to quaternary structure, interacts with SELPLG/PSGL1 and PODXL2 through the sialyl Lewis X epitope. SELPLG sulfation appears not to be required for this interaction.

It localises to the cell membrane. Its function is as follows. Cell-surface glycoprotein having a role in immunoadhesion. Mediates in the adhesion of blood neutrophils in cytokine-activated endothelium through interaction with SELPLG/PSGL1. May have a role in capillary morphogenesis. The polypeptide is E-selectin (Sele) (Rattus norvegicus (Rat)).